The sequence spans 164 residues: ATP synthase subunit b 1 (164 aa).

Residues 8–28 (PETWVAIAFVILMGLFAYLGV) traverse the membrane as a helical segment.

Belongs to the ATPase B chain family. As to quaternary structure, F-type ATPases have 2 components, F(1) - the catalytic core - and F(0) - the membrane proton channel. F(1) has five subunits: alpha(3), beta(3), gamma(1), delta(1), epsilon(1). F(0) has three main subunits: a(1), b(2) and c(10-14). The alpha and beta chains form an alternating ring which encloses part of the gamma chain. F(1) is attached to F(0) by a central stalk formed by the gamma and epsilon chains, while a peripheral stalk is formed by the delta and b chains.

The protein localises to the cell inner membrane. F(1)F(0) ATP synthase produces ATP from ADP in the presence of a proton or sodium gradient. F-type ATPases consist of two structural domains, F(1) containing the extramembraneous catalytic core and F(0) containing the membrane proton channel, linked together by a central stalk and a peripheral stalk. During catalysis, ATP synthesis in the catalytic domain of F(1) is coupled via a rotary mechanism of the central stalk subunits to proton translocation. Its function is as follows. Component of the F(0) channel, it forms part of the peripheral stalk, linking F(1) to F(0). This is ATP synthase subunit b 1 from Bradyrhizobium sp. (strain ORS 278).